Consider the following 67-residue polypeptide: MIIEFNLLVILLVQMPLSFYMLYRLCYLLFCFLECFLNLFKKCGVFKNAKWLTRIQRVFYLYLFVYR.

Residues C26–F46 traverse the membrane as a helical segment.

The protein belongs to the plectrovirus ORF11 family.

It localises to the host membrane. This is an uncharacterized protein from Spiroplasma virus SpV1-C74 (SpV1).